The chain runs to 415 residues: Queuine tRNA-ribosyltransferase accessory subunit 2 (415 aa).

The Zn(2+) site is built by Cys-351, Cys-353, Cys-356, and His-382.

This sequence belongs to the queuine tRNA-ribosyltransferase family. QTRT2 subfamily. As to quaternary structure, heterodimer of a catalytic subunit QTRT1 and an accessory subunit QTRT2. Requires Zn(2+) as cofactor.

The protein resides in the cytoplasm. The protein localises to the mitochondrion outer membrane. Functionally, non-catalytic subunit of the queuine tRNA-ribosyltransferase (TGT) that catalyzes the base-exchange of a guanine (G) residue with queuine (Q) at position 34 (anticodon wobble position) in tRNAs with GU(N) anticodons (tRNA-Asp, -Asn, -His and -Tyr), resulting in the hypermodified nucleoside queuosine (7-(((4,5-cis-dihydroxy-2-cyclopenten-1-yl)amino)methyl)-7-deazaguanosine). This Pongo abelii (Sumatran orangutan) protein is Queuine tRNA-ribosyltransferase accessory subunit 2.